Here is an 82-residue protein sequence, read N- to C-terminus: MPKRTLQGVVVSDKQAKTIVVRVDRRFTHPIYKKTIRRSKNYHAHDENNQFKPGDMVWIEESKPISKLKRWTVVRGEPKKTA.

It belongs to the universal ribosomal protein uS17 family. Part of the 30S ribosomal subunit.

Functionally, one of the primary rRNA binding proteins, it binds specifically to the 5'-end of 16S ribosomal RNA. The chain is Small ribosomal subunit protein uS17 from Rhodopseudomonas palustris (strain TIE-1).